A 246-amino-acid polypeptide reads, in one-letter code: Ribonuclease PH (246 aa).

Phosphate is bound by residues Arg91 and 129 to 131; that span reads GTR.

The protein belongs to the RNase PH family. In terms of assembly, homohexameric ring arranged as a trimer of dimers.

The enzyme catalyses tRNA(n+1) + phosphate = tRNA(n) + a ribonucleoside 5'-diphosphate. Functionally, phosphorolytic 3'-5' exoribonuclease that plays an important role in tRNA 3'-end maturation. Removes nucleotide residues following the 3'-CCA terminus of tRNAs; can also add nucleotides to the ends of RNA molecules by using nucleoside diphosphates as substrates, but this may not be physiologically important. Probably plays a role in initiation of 16S rRNA degradation (leading to ribosome degradation) during starvation. The chain is Ribonuclease PH from Paraburkholderia phymatum (strain DSM 17167 / CIP 108236 / LMG 21445 / STM815) (Burkholderia phymatum).